Consider the following 389-residue polypeptide: Radial spoke head protein 3 homolog B (389 aa).

Residues 63-106 (PTGQVPGQPDPLELQRQQQARRRALARKRAQEQLKPRTPEPVEG) form a disordered region. A compositionally biased stretch (basic residues) spans 81–90 (QARRRALARK). Positions 91–106 (RAQEQLKPRTPEPVEG) are enriched in basic and acidic residues. A Phosphothreonine; by MAPK1 modification is found at Thr143. Residues 206–242 (YEEIRNVELAEVQRLEEQERRHREEKERRKKQQWEIV) adopt a coiled-coil conformation. The interval 332 to 389 (EAMPPGQKTNVINGPNTVTDPSVTTLHTQKPVLDRVSSQPAPSQERKPVEEGGHLMAE) is disordered. The span at 338 to 359 (QKTNVINGPNTVTDPSVTTLHT) shows a compositional bias: polar residues. Positions 375-389 (QERKPVEEGGHLMAE) are enriched in basic and acidic residues.

This sequence belongs to the flagellar radial spoke RSP3 family. As to quaternary structure, component of the axonemal radial spoke 1 (RS1) and 2 (RS2) complexes, at least composed of spoke head proteins RSPH1, RSPH3B, RSPH9 and the cilia-specific component RSPH4A or sperm-specific component RSPH6A, spoke stalk proteins RSPH14, DNAJB13, DYDC1, ROPN1L and NME5, and the RS1 complex-specific anchor protein IQUB. Interacts with IQUB. Interacts with phosphorylated MAPK1. Interacts with MEK1. Interacts with PKA regulatory subunits PRKAR1A and PRKAR1B. Interacts with RSPH1. Interacts with RSPH4A. Interacts with RSPH6A. Interacts with RSPH9. Interacts with LRRC23. As to expression, expressed in ependymal cells (at protein level).

The protein resides in the cytoplasm. Its subcellular location is the cytoskeleton. The protein localises to the cilium axoneme. It localises to the flagellum axoneme. Functionally, functions as part of axonemal radial spoke complexes that play an important part in the motility of sperm and cilia. Functions as a protein kinase A-anchoring protein that scaffolds the cAMP-dependent protein kinase holoenzyme. May serve as a point of convergence for MAPK and PKA signaling in cilia. The chain is Radial spoke head protein 3 homolog B (Rsph3b) from Mus musculus (Mouse).